The following is a 58-amino-acid chain: MNNKKNIFDIVMYIIFGVLSLFLVAKTDYGTGVLVFVAILYLAVIAYKIKQVFSNSDS.

2 helical membrane-spanning segments follow: residues 7–27 (IFDIVMYIIFGVLSLFLVAKT) and 29–49 (YGTGVLVFVAILYLAVIAYKI).

It localises to the cell membrane. This is an uncharacterized protein from Bacillus subtilis (strain 168).